A 404-amino-acid polypeptide reads, in one-letter code: Cysteine desulfurase IscS (404 aa).

Pyridoxal 5'-phosphate-binding positions include 75 to 76 (AT), asparagine 155, glutamine 183, and 203 to 205 (SAH). Lysine 206 carries the post-translational modification N6-(pyridoxal phosphate)lysine. Residue threonine 243 coordinates pyridoxal 5'-phosphate. The Cysteine persulfide intermediate role is filled by cysteine 328. Cysteine 328 contacts [2Fe-2S] cluster.

This sequence belongs to the class-V pyridoxal-phosphate-dependent aminotransferase family. NifS/IscS subfamily. In terms of assembly, homodimer. Forms a heterotetramer with IscU, interacts with other sulfur acceptors. It depends on pyridoxal 5'-phosphate as a cofactor.

The protein localises to the cytoplasm. It catalyses the reaction (sulfur carrier)-H + L-cysteine = (sulfur carrier)-SH + L-alanine. Its pathway is cofactor biosynthesis; iron-sulfur cluster biosynthesis. Its function is as follows. Master enzyme that delivers sulfur to a number of partners involved in Fe-S cluster assembly, tRNA modification or cofactor biosynthesis. Catalyzes the removal of elemental sulfur atoms from cysteine to produce alanine. Functions as a sulfur delivery protein for Fe-S cluster synthesis onto IscU, an Fe-S scaffold assembly protein, as well as other S acceptor proteins. The polypeptide is Cysteine desulfurase IscS (Pseudomonas syringae pv. tomato (strain ATCC BAA-871 / DC3000)).